The chain runs to 281 residues: 4-diphosphocytidyl-2-C-methyl-D-erythritol kinase (281 aa).

Residue K11 is part of the active site. Residue 95–105 participates in ATP binding; that stretch reads PVAAGLGGGSS. D137 is a catalytic residue.

The protein belongs to the GHMP kinase family. IspE subfamily.

The enzyme catalyses 4-CDP-2-C-methyl-D-erythritol + ATP = 4-CDP-2-C-methyl-D-erythritol 2-phosphate + ADP + H(+). It participates in isoprenoid biosynthesis; isopentenyl diphosphate biosynthesis via DXP pathway; isopentenyl diphosphate from 1-deoxy-D-xylulose 5-phosphate: step 3/6. Catalyzes the phosphorylation of the position 2 hydroxy group of 4-diphosphocytidyl-2C-methyl-D-erythritol. This is 4-diphosphocytidyl-2-C-methyl-D-erythritol kinase from Geobacter metallireducens (strain ATCC 53774 / DSM 7210 / GS-15).